Here is a 287-residue protein sequence, read N- to C-terminus: Shikimate kinase 3, chloroplastic (287 aa).

Residues 1 to 57 constitute a chloroplast transit peptide; sequence MDAGVGLRAKPGAWAGLGNPRRSSTARVPVRFAVEKFAQPLVLGSDRRSCGAKLKVS. Residue 98–105 coordinates ATP; that stretch reads GMMGSGKT. Thr105 lines the Mg(2+) pocket. Substrate contacts are provided by Asp123, Arg148, and Gly170. Arg209 serves as a coordination point for ATP.

It belongs to the shikimate kinase family. Mg(2+) serves as cofactor. As to expression, expressed in panicles.

Its subcellular location is the plastid. It localises to the chloroplast. The catalysed reaction is shikimate + ATP = 3-phosphoshikimate + ADP + H(+). It participates in metabolic intermediate biosynthesis; chorismate biosynthesis; chorismate from D-erythrose 4-phosphate and phosphoenolpyruvate: step 5/7. Its function is as follows. Catalyzes the specific phosphorylation of the 3-hydroxyl group of shikimic acid using ATP as a cosubstrate. In Oryza sativa subsp. japonica (Rice), this protein is Shikimate kinase 3, chloroplastic (SK3).